A 338-amino-acid chain; its full sequence is Methionine import ATP-binding protein MetN 2 (338 aa).

The 241-residue stretch at 2–242 (IEIEKVCVDF…PQHAFTQQLV (241 aa)) folds into the ABC transporter domain. 39–46 (GTSGAGKS) contributes to the ATP binding site.

Belongs to the ABC transporter superfamily. Methionine importer (TC 3.A.1.24) family. In terms of assembly, the complex is composed of two ATP-binding proteins (MetN), two transmembrane proteins (MetI) and a solute-binding protein (MetQ).

It is found in the cell inner membrane. It catalyses the reaction L-methionine(out) + ATP + H2O = L-methionine(in) + ADP + phosphate + H(+). It carries out the reaction D-methionine(out) + ATP + H2O = D-methionine(in) + ADP + phosphate + H(+). Its function is as follows. Part of the ABC transporter complex MetNIQ involved in methionine import. Responsible for energy coupling to the transport system. This Salmonella typhimurium (strain LT2 / SGSC1412 / ATCC 700720) protein is Methionine import ATP-binding protein MetN 2.